We begin with the raw amino-acid sequence, 130 residues long: Small ribosomal subunit protein uS9 (130 aa).

It belongs to the universal ribosomal protein uS9 family.

This is Small ribosomal subunit protein uS9 from Pseudomonas fluorescens (strain Pf0-1).